Consider the following 855-residue polypeptide: Suppressor of tumorigenicity 14 protein homolog (855 aa).

Positions 1–21 (MKSERARRGAGGSGDLGAGFK) are disordered. The Cytoplasmic portion of the chain corresponds to 1–55 (MKSERARRGAGGSGDLGAGFKYTSRPENMNGCEEGVEFLPANNSSKVEKGGPRRW). The residue at position 13 (Ser-13) is a Phosphoserine. The helical; Signal-anchor for type II membrane protein transmembrane segment at 56–76 (VVLMAVLAAFLALSLLAGLLA) threads the bilayer. Over 77-855 (WHFQDRNVRV…RDWIKAQIGV (779 aa)) the chain is Extracellular. The SEA domain occupies 86 to 203 (VQKIFNGYLS…TSVVAFPSDP (118 aa)). Asn-109 is a glycosylation site (N-linked (GlcNAc...) asparagine). Cys-214 and Cys-244 are joined by a disulfide. 2 CUB domains span residues 214 to 334 (CSFA…FFQL) and 340 to 447 (CGGY…FLSF). N-linked (GlcNAc...) asparagine glycans are attached at residues Asn-302 and Asn-365. 15 cysteine pairs are disulfide-bonded: Cys-340-Cys-366, Cys-397-Cys-410, Cys-453-Cys-464, Cys-459-Cys-477, Cys-471-Cys-486, Cys-488-Cys-501, Cys-496-Cys-514, Cys-508-Cys-523, Cys-525-Cys-537, Cys-532-Cys-550, Cys-544-Cys-559, Cys-567-Cys-579, Cys-574-Cys-593, Cys-587-Cys-602, and Cys-641-Cys-657. LDL-receptor class A domains lie at 452–487 (PCPGSFMCNTGRCIRKELRCDGWADCTDYSDELDCK), 487–524 (KCNATYQFTCRDKFCKPLFWVCDSVKDCEDGSDEEGCS), 524–560 (SCPPNTFKCGNGKCLPQSQQCDRKDDCGDGSDEAKCQ), and 566–603 (PCTEHTHRCLNGLCVDKSNPQCDGNEDCTDGSDEKDCD). Asn-489 carries an N-linked (GlcNAc...) asparagine glycan. In terms of domain architecture, Peptidase S1 spans 615–854 (VVGGENSDQG…FRDWIKAQIG (240 aa)). Catalysis depends on charge relay system residues His-656 and Asp-711. Asn-772 carries N-linked (GlcNAc...) asparagine glycosylation. 2 cysteine pairs are disulfide-bonded: Cys-776-Cys-790 and Cys-801-Cys-830. Ser-805 acts as the Charge relay system in catalysis.

It belongs to the peptidase S1 family. As to quaternary structure, interacts with CDCP1. May interact with TMEFF1.

Its subcellular location is the membrane. The catalysed reaction is Cleaves various synthetic substrates with Arg or Lys at the P1 position and prefers small side-chain amino acids, such as Ala and Gly, at the P2 position.. In terms of biological role, exhibits trypsin-like activity as defined by cleavage of synthetic substrates with Arg or Lys as the P1 site. Involved in the terminal differentiation of keratinocytes through prostasin (PRSS8) activation and filaggrin (FLG) processing. Proteolytically cleaves and therefore activates TMPRSS13. This Bos taurus (Bovine) protein is Suppressor of tumorigenicity 14 protein homolog (ST14).